The sequence spans 149 residues: Cytochrome c-556 (149 aa).

A signal peptide spans 1-20; the sequence is MLRTVIVAGALVLTASAVMA. Residues Met-32, Cys-137, Cys-140, and His-141 each coordinate heme c.

In terms of assembly, monomer. In terms of processing, binds 1 heme c group covalently per subunit.

Functionally, low-spin monoheme cytochrome c. This is Cytochrome c-556 from Rhodopseudomonas palustris (strain ATCC BAA-98 / CGA009).